Here is a 223-residue protein sequence, read N- to C-terminus: Urease subunit alpha (223 aa).

The tract at residues 1–101 (MHFTQQQLQR…LVTIHEPIAN (101 aa)) is urease gamma. Residues 102–223 (DDKIKAGEIF…LSKAKEKGFL (122 aa)) form a urease beta region.

The protein in the N-terminal section; belongs to the urease gamma subunit family. In the C-terminal section; belongs to the urease beta subunit family. Heterohexamer of 3 UreA (alpha) and 3 UreB (beta) subunits.

The protein localises to the cytoplasm. It carries out the reaction urea + 2 H2O + H(+) = hydrogencarbonate + 2 NH4(+). Its pathway is nitrogen metabolism; urea degradation; CO(2) and NH(3) from urea (urease route): step 1/1. In Campylobacter lari, this protein is Urease subunit alpha.